The chain runs to 152 residues: Small ribosomal subunit protein bS16 (152 aa).

The span at 118–130 (AEKHKAKASEKKA) shows a compositional bias: basic and acidic residues. The disordered stretch occupies residues 118 to 152 (AEKHKAKASEKKAAAAASADEAGSAAADDAEGSES). Positions 131–144 (AAAASADEAGSAAA) are enriched in low complexity.

This sequence belongs to the bacterial ribosomal protein bS16 family.

This Beutenbergia cavernae (strain ATCC BAA-8 / DSM 12333 / CCUG 43141 / JCM 11478 / NBRC 16432 / NCIMB 13614 / HKI 0122) protein is Small ribosomal subunit protein bS16.